A 217-amino-acid chain; its full sequence is Thiamine-phosphate synthase (217 aa).

4-amino-2-methyl-5-(diphosphooxymethyl)pyrimidine contacts are provided by residues 39 to 43 and N71; that span reads QLRRK. The Mg(2+) site is built by D72 and D91. S110 contributes to the 4-amino-2-methyl-5-(diphosphooxymethyl)pyrimidine binding site. 137 to 139 contributes to the 2-[(2R,5Z)-2-carboxy-4-methylthiazol-5(2H)-ylidene]ethyl phosphate binding site; it reads SPT. K140 is a binding site for 4-amino-2-methyl-5-(diphosphooxymethyl)pyrimidine. Residues G173 and 193 to 194 contribute to the 2-[(2R,5Z)-2-carboxy-4-methylthiazol-5(2H)-ylidene]ethyl phosphate site; that span reads IS.

This sequence belongs to the thiamine-phosphate synthase family. It depends on Mg(2+) as a cofactor.

It carries out the reaction 2-[(2R,5Z)-2-carboxy-4-methylthiazol-5(2H)-ylidene]ethyl phosphate + 4-amino-2-methyl-5-(diphosphooxymethyl)pyrimidine + 2 H(+) = thiamine phosphate + CO2 + diphosphate. The catalysed reaction is 2-(2-carboxy-4-methylthiazol-5-yl)ethyl phosphate + 4-amino-2-methyl-5-(diphosphooxymethyl)pyrimidine + 2 H(+) = thiamine phosphate + CO2 + diphosphate. It catalyses the reaction 4-methyl-5-(2-phosphooxyethyl)-thiazole + 4-amino-2-methyl-5-(diphosphooxymethyl)pyrimidine + H(+) = thiamine phosphate + diphosphate. Its pathway is cofactor biosynthesis; thiamine diphosphate biosynthesis; thiamine phosphate from 4-amino-2-methyl-5-diphosphomethylpyrimidine and 4-methyl-5-(2-phosphoethyl)-thiazole: step 1/1. Functionally, condenses 4-methyl-5-(beta-hydroxyethyl)thiazole monophosphate (THZ-P) and 2-methyl-4-amino-5-hydroxymethyl pyrimidine pyrophosphate (HMP-PP) to form thiamine monophosphate (TMP). The polypeptide is Thiamine-phosphate synthase (Bordetella bronchiseptica (strain ATCC BAA-588 / NCTC 13252 / RB50) (Alcaligenes bronchisepticus)).